The sequence spans 206 residues: Emopamil-binding protein-like (206 aa).

The next 4 helical transmembrane spans lie at Glu10–Leu30, Gly42–Val62, Val101–Val121, and Cys165–Trp185. In terms of domain architecture, EXPERA spans Ala39–Leu184.

The protein belongs to the EBP family. As to quaternary structure, homodimer. Widely expressed with highest levels in liver, lung and kidney.

It localises to the endoplasmic reticulum membrane. Does not possess sterol isomerase activity and does not bind sigma ligands. In Homo sapiens (Human), this protein is Emopamil-binding protein-like (EBPL).